Here is a 129-residue protein sequence, read N- to C-terminus: Succinate dehydrogenase cytochrome b556 subunit (129 aa).

Residues 1-26 (MIRNVKKQRPVNLDLQTIRFPITAIA) are Cytoplasmic-facing. A helical membrane pass occupies residues 27–52 (SILHRVSGVITFIAVGILLWLLGTSL). At 53 to 68 (SSPEGFQQAADIMDGF) the chain is on the periplasmic side. Residues 69-89 (IVKFIMWGILTALAYHVIVGI) form a helical membrane-spanning segment. Histidine 84 provides a ligand contact to heme. The Cytoplasmic portion of the chain corresponds to 90–108 (RHMLMDFGYLEETFEAGQR). The helical transmembrane segment at 109 to 129 (SAKISFVITVVLSLLAGVLVW) threads the bilayer.

This sequence belongs to the cytochrome b560 family. Part of an enzyme complex containing four subunits: a flavoprotein, an iron-sulfur protein, plus two membrane-anchoring proteins, SdhC and SdhD. The complex can form homotrimers. The cofactor is heme.

The protein resides in the cell inner membrane. Its pathway is carbohydrate metabolism; tricarboxylic acid cycle. In terms of biological role, membrane-anchoring subunit of succinate dehydrogenase (SDH). This chain is Succinate dehydrogenase cytochrome b556 subunit (sdhC), found in Salmonella typhi.